The sequence spans 511 residues: Sterol 14-alpha demethylase resB (511 aa).

Residues 3-23 (ILWIVAYALLAFAASIALNLV) traverse the membrane as a helical segment. Cysteine 451 contributes to the heme binding site.

This sequence belongs to the cytochrome P450 family. It depends on heme as a cofactor.

The protein resides in the membrane. It carries out the reaction a 14alpha-methyl steroid + 3 reduced [NADPH--hemoprotein reductase] + 3 O2 = a Delta(14) steroid + formate + 3 oxidized [NADPH--hemoprotein reductase] + 4 H2O + 4 H(+). It catalyses the reaction a 14alpha-methyl steroid + reduced [NADPH--hemoprotein reductase] + O2 = a 14alpha-hydroxymethyl steroid + oxidized [NADPH--hemoprotein reductase] + H2O + H(+). The catalysed reaction is a 14alpha-hydroxymethyl steroid + reduced [NADPH--hemoprotein reductase] + O2 = a 14alpha-formyl steroid + oxidized [NADPH--hemoprotein reductase] + 2 H2O + H(+). The enzyme catalyses a 14alpha-formyl steroid + reduced [NADPH--hemoprotein reductase] + O2 = a Delta(14) steroid + formate + oxidized [NADPH--hemoprotein reductase] + H2O + 2 H(+). It carries out the reaction lanosterol + 3 reduced [NADPH--hemoprotein reductase] + 3 O2 = 4,4-dimethyl-5alpha-cholesta-8,14,24-trien-3beta-ol + formate + 3 oxidized [NADPH--hemoprotein reductase] + 4 H2O + 4 H(+). It catalyses the reaction lanosterol + reduced [NADPH--hemoprotein reductase] + O2 = 32-hydroxylanosterol + oxidized [NADPH--hemoprotein reductase] + H2O + H(+). The catalysed reaction is 32-hydroxylanosterol + reduced [NADPH--hemoprotein reductase] + O2 = 32-oxolanosterol + oxidized [NADPH--hemoprotein reductase] + 2 H2O + H(+). The enzyme catalyses 32-oxolanosterol + reduced [NADPH--hemoprotein reductase] + O2 = 4,4-dimethyl-5alpha-cholesta-8,14,24-trien-3beta-ol + formate + oxidized [NADPH--hemoprotein reductase] + H2O + 2 H(+). It carries out the reaction eburicol + 3 reduced [NADPH--hemoprotein reductase] + 3 O2 = 14-demethyleburicol + formate + 3 oxidized [NADPH--hemoprotein reductase] + 4 H2O + 4 H(+). It catalyses the reaction eburicol + reduced [NADPH--hemoprotein reductase] + O2 = 32-hydroxyeburicol + oxidized [NADPH--hemoprotein reductase] + H2O + H(+). The catalysed reaction is 32-hydroxyeburicol + reduced [NADPH--hemoprotein reductase] + O2 = 32-oxoeburicol + oxidized [NADPH--hemoprotein reductase] + 2 H2O + H(+). The enzyme catalyses 32-oxoeburicol + reduced [NADPH--hemoprotein reductase] + O2 = 14-demethyleburicol + formate + oxidized [NADPH--hemoprotein reductase] + H2O + 2 H(+). In terms of biological role, sterol 14-alpha demethylase; part of the gene cluster that mediates the biosynthesis of the tetrahydropyranyl antifungal agent restricticin that acts as an inhibitor of CYP51 and blocks the ergosterol biosynthesis. Sterol 14-alpha-demethylase plays a critical role in the biosynthesis of ergosterol, the major sterol component in fungal membranes that participates in a variety of functions. ResB acts as a self-resistant CYP51 that contains mutations found in CYP51s isolated from azole resistance strains and that is not inhibited by the final product of the cluster, restricticin. This Aspergillus sclerotiorum protein is Sterol 14-alpha demethylase resB.